We begin with the raw amino-acid sequence, 174 residues long: Ferredoxin-thioredoxin reductase, variable chain, chloroplastic (174 aa).

The transit peptide at 1–62 (MTTGVAVMSS…RTRARLAICC (62 aa)) directs the protein to the chloroplast. Over residues 69–81 (DSSTGFDSSSSSP) the composition is skewed to low complexity. The tract at residues 69-89 (DSSTGFDSSSSSPPEEDEELK) is disordered. Phosphoserine is present on residues Ser70 and Ser71.

Belongs to the ferredoxin thioredoxin reductase alpha subunit family. As to quaternary structure, heterodimer of subunit A (variable subunit) and subunit B (catalytic subunit). Heterodimeric FTR forms a complex with ferredoxin and thioredoxin.

It localises to the plastid. The protein resides in the chloroplast. Its function is as follows. Variable subunit of the ferredoxin-thioredoxin reductase (FTR), which catalyzes the two-electron reduction of thioredoxins by the electrons provided by reduced ferredoxin. The protein is Ferredoxin-thioredoxin reductase, variable chain, chloroplastic (FTRV) of Spinacia oleracea (Spinach).